The sequence spans 347 residues: Probable ribonucleotide transport ATP-binding protein mkl (347 aa).

The 237-residue stretch at 16–252 (IEVKGLTKSF…DEPVVRQFLN (237 aa)) folds into the ABC transporter domain. 48-55 (GPSGTGKS) lines the ATP pocket.

It belongs to the ABC transporter superfamily.

Functionally, not known, could be involved in the transport of ribonucleotides. This Mycobacterium leprae (strain TN) protein is Probable ribonucleotide transport ATP-binding protein mkl (mkl).